We begin with the raw amino-acid sequence, 581 residues long: Frizzled-3 (581 aa).

An N-terminal signal peptide occupies residues 1 to 19; that stretch reads MYAASILILHLTWAVATIA. At 20–237 the chain is on the extracellular side; the sequence is ANGAGHNGPV…TSSQKKTSET (218 aa). Residues 35–156 enclose the FZ domain; the sequence is PNGLQCQPIA…PEKHELCMQI (122 aa). Intrachain disulfides connect cysteine 40/cysteine 101, cysteine 48/cysteine 94, cysteine 85/cysteine 123, cysteine 112/cysteine 153, and cysteine 116/cysteine 141. N-linked (GlcNAc...) asparagine glycosylation is present at asparagine 54. Asparagine 206 carries N-linked (GlcNAc...) asparagine glycosylation. Residues 238–258 form a helical membrane-spanning segment; sequence LILGLSAVCFVLTLFALVTFW. Topologically, residues 259–270 are cytoplasmic; it reads AEPTRFGYPERP. A helical membrane pass occupies residues 271 to 291; it reads VLFLCLCYNLFSVCYLERIVF. Topologically, residues 292–321 are extracellular; that stretch reads HNQARMHDVELQGRLMRPGCLLTPPCLASY. A helical transmembrane segment spans residues 322 to 342; that stretch reads ITTSYLSLCAASWWLIFALCF. At 343-359 the chain is on the cytoplasmic side; that stretch reads YLSSHKKWSSEALEKRS. Residues 360–380 form a helical membrane-spanning segment; it reads GLFHVLAWVPPLAPPIAALLL. The Extracellular segment spans residues 381 to 393; that stretch reads EKVRPSELTGMCY. Residues 394-414 form a helical membrane-spanning segment; the sequence is APGFVELPALVLLLLGLYFTL. Residues 415 to 442 lie on the Cytoplasmic side of the membrane; it reads RASRSLLSLQQQLQPTLAHHRFGQIRKR. Residues 443 to 463 traverse the membrane as a helical segment; it reads FVLFSLLYFAPTTAGVVAALC. At 464–488 the chain is on the extracellular side; the sequence is ERYADSVPSCSTPDDCLSPTPLSAW. A helical transmembrane segment spans residues 489–509; it reads PALVRIFFQLVGGTLTGLWVW. Residues 510-581 lie on the Cytoplasmic side of the membrane; the sequence is SRKTCESYRN…PVYNPNQSRV (72 aa). The PDZ-binding motif lies at 579 to 581; that stretch reads SRV.

Belongs to the G-protein coupled receptor Fz/Smo family. As to expression, wing, leg and eye imaginal disks. In embryos, expressed is seen in brain, proventriculus, Malpighian tubules, anal plate and visceral mesoderm of parasegment 8.

The protein resides in the membrane. Functionally, receptor for Wnt proteins. Most of frizzled receptors are coupled to the beta-catenin canonical signaling pathway, which leads to the activation of disheveled proteins, inhibition of GSK-3 kinase, nuclear accumulation of beta-catenin and activation of Wnt target genes. A second signaling pathway involving PKC and calcium fluxes has been seen for some family members, but it is not yet clear if it represents a distinct pathway or if it can be integrated in the canonical pathway, as PKC seems to be required for Wnt-mediated inactivation of GSK-3 kinase. Both pathways seem to involve interactions with G-proteins. Required to coordinate the cytoskeletons of epidermal cells to produce a parallel array of cuticular hairs and bristles. The polypeptide is Frizzled-3 (fz3) (Drosophila melanogaster (Fruit fly)).